The primary structure comprises 357 residues: RNA 3'-terminal phosphate cyclase (357 aa).

ATP-binding positions include Gln-102 and 293–296 (HMGD). His-319 functions as the Tele-AMP-histidine intermediate in the catalytic mechanism.

It belongs to the RNA 3'-terminal cyclase family. Type 1 subfamily.

Its subcellular location is the cytoplasm. The enzyme catalyses a 3'-end 3'-phospho-ribonucleotide-RNA + ATP = a 3'-end 2',3'-cyclophospho-ribonucleotide-RNA + AMP + diphosphate. In terms of biological role, catalyzes the conversion of 3'-phosphate to a 2',3'-cyclic phosphodiester at the end of RNA. The mechanism of action of the enzyme occurs in 3 steps: (A) adenylation of the enzyme by ATP; (B) transfer of adenylate to an RNA-N3'P to produce RNA-N3'PP5'A; (C) and attack of the adjacent 2'-hydroxyl on the 3'-phosphorus in the diester linkage to produce the cyclic end product. The biological role of this enzyme is unknown but it is likely to function in some aspects of cellular RNA processing. This Desulfurococcus amylolyticus (strain DSM 18924 / JCM 16383 / VKM B-2413 / 1221n) (Desulfurococcus kamchatkensis) protein is RNA 3'-terminal phosphate cyclase.